The chain runs to 505 residues: Salutaridine synthase (505 aa).

A helical transmembrane segment spans residues 10 to 30; that stretch reads DFWMIACTVIIVFALVKFMFS. C444 serves as a coordination point for heme.

This sequence belongs to the cytochrome P450 family. Requires heme as cofactor.

Its subcellular location is the endoplasmic reticulum membrane. The catalysed reaction is (R)-reticuline + reduced [NADPH--hemoprotein reductase] + O2 = salutaridine + oxidized [NADPH--hemoprotein reductase] + 2 H2O + H(+). Functionally, cytochrome P450 monooxygenase involved in biosynthesis of morphinan-type benzylisoquinoline and opiate alkaloids natural products. Catalyzes the formation of the morphinan alkaloid salutaridine by intramolecular phenol oxidation of (R)-reticuline without the incorporation of oxygen into the product. Can also use (R)-norreticuline as substrate. The chain is Salutaridine synthase from Papaver somniferum (Opium poppy).